We begin with the raw amino-acid sequence, 883 residues long: DNA double-strand break repair Rad50 ATPase (883 aa).

ATP contacts are provided by residues Lys12, 32 to 38 (NGSGKSS), and Gln137. A coiled-coil region spans residues 244–283 (ERYEESRTALADVEETIADVREAVAEAERERETLADRVSD). 2 disordered regions span residues 271–290 (ERER…RASD) and 305–326 (DDPD…REAV). Residues 313 to 326 (SAERDAVADQREAV) are compositionally biased toward basic and acidic residues. Coiled-coil stretches lie at residues 336-389 (AVSR…IEAL) and 414-452 (LDDA…LDEG). The Zinc-hook domain occupies 407–506 (FGAAEAFLDD…RVDRGESLVA (100 aa)). 2 residues coordinate Zn(2+): Cys454 and Cys457. Positions 508-565 (EDRVDDLEQQRERAVERRDEQADIADAKRDQAAEKRDRAADLDAEAEDARADAAAKRD) are disordered. Coiled coils occupy residues 571–604 (RETL…AADA) and 668–720 (KLQA…VTAL).

This sequence belongs to the SMC family. RAD50 subfamily. As to quaternary structure, homodimer. Forms a heterotetramer composed of two Mre11 subunits and two Rad50 subunits. Requires Zn(2+) as cofactor.

Its function is as follows. Part of the Rad50/Mre11 complex, which is involved in the early steps of DNA double-strand break (DSB) repair. Rad50 controls the balance between DNA end bridging and DNA resection via ATP-dependent structural rearrangements of the Rad50/Mre11 complex. The sequence is that of DNA double-strand break repair Rad50 ATPase from Halobacterium salinarum (strain ATCC 700922 / JCM 11081 / NRC-1) (Halobacterium halobium).